A 154-amino-acid chain; its full sequence is tRNA (cytidine(34)-2'-O)-methyltransferase (154 aa).

Residues Leu-78, Gly-100, Leu-122, and Ser-130 each coordinate S-adenosyl-L-methionine.

This sequence belongs to the class IV-like SAM-binding methyltransferase superfamily. RNA methyltransferase TrmH family. TrmL subfamily. In terms of assembly, homodimer.

It is found in the cytoplasm. It catalyses the reaction cytidine(34) in tRNA + S-adenosyl-L-methionine = 2'-O-methylcytidine(34) in tRNA + S-adenosyl-L-homocysteine + H(+). The catalysed reaction is 5-carboxymethylaminomethyluridine(34) in tRNA(Leu) + S-adenosyl-L-methionine = 5-carboxymethylaminomethyl-2'-O-methyluridine(34) in tRNA(Leu) + S-adenosyl-L-homocysteine + H(+). Its function is as follows. Methylates the ribose at the nucleotide 34 wobble position in the two leucyl isoacceptors tRNA(Leu)(CmAA) and tRNA(Leu)(cmnm5UmAA). Catalyzes the methyl transfer from S-adenosyl-L-methionine to the 2'-OH of the wobble nucleotide. The chain is tRNA (cytidine(34)-2'-O)-methyltransferase from Methylovorus glucosotrophus (strain SIP3-4).